We begin with the raw amino-acid sequence, 148 residues long: Large ribosomal subunit protein eL19 (148 aa).

A compositionally biased stretch (basic residues) spans 52 to 76; it reads KPKKGISSYRSKKIAQQKKKGRRRG. The disordered stretch occupies residues 52 to 95; it reads KPKKGISSYRSKKIAQQKKKGRRRGPGSIKGAKGARRPKKDEWM.

The protein belongs to the eukaryotic ribosomal protein eL19 family. In terms of assembly, part of the 50S ribosomal subunit.

Binds to the 23S rRNA. In Methanothermobacter thermautotrophicus (strain ATCC 29096 / DSM 1053 / JCM 10044 / NBRC 100330 / Delta H) (Methanobacterium thermoautotrophicum), this protein is Large ribosomal subunit protein eL19.